Reading from the N-terminus, the 243-residue chain is E3 ubiquitin-protein ligase RMA3 (243 aa).

An RING-type zinc finger spans residues 44–92 (CNICLDTAHDPVVTLCGHLFCWPCIYKWLHVQLSSVSVDQHQNNCPVCK). Residues 110–135 (SPSSTFGSKKQDALSTDIPRRPAPSA) are disordered. A helical; Anchor for type IV membrane protein membrane pass occupies residues 223–243 (KSLNRVSIFFLCCIILCLLLF).

As to expression, ubiquitous. Highly expressed in roots.

The protein localises to the endoplasmic reticulum membrane. The catalysed reaction is S-ubiquitinyl-[E2 ubiquitin-conjugating enzyme]-L-cysteine + [acceptor protein]-L-lysine = [E2 ubiquitin-conjugating enzyme]-L-cysteine + N(6)-ubiquitinyl-[acceptor protein]-L-lysine.. It participates in protein modification; protein ubiquitination. In terms of biological role, E3 ubiquitin-protein ligase. The chain is E3 ubiquitin-protein ligase RMA3 (RMA3) from Arabidopsis thaliana (Mouse-ear cress).